Consider the following 1187-residue polypeptide: Disease resistance protein TAO1 (1187 aa).

In terms of domain architecture, TIR spans 38 to 202; sequence WLHPVFLSFR…KISKDVSDVL (165 aa). Glu113 is an active-site residue. Residues 217–478 enclose the NB-ARC domain; that stretch reads EAHTTEITSL…FFRRERIETL (262 aa). 14 LRR repeats span residues 498–522, 611–633, 635–658, 660–679, 680–703, 704–727, 728–750, 752–775, 799–823, 824–849, 870–894, 895–918, 920–942, and 953–974; these read DKSLLSLNLGNIEMHNLLVQLGLDI, SRKLRLLHWERYPLTCLPPKFNP, FLVKINMRDSMLEKLWDGNEPIRN, KWMDLSFCVNLKELPDFSTA, TNLQELRLINCLSLVELPSSIGNA, TNLLELDLIDCSSLVKLPSSIGNL, TNLKKLFLNRCSSLVKLPSSFGN, TSLKELNLSGCSSLLEIPSSIGNI, NTNLKELHLLNCSSLMECPSSMLNL, TRLEDLNLSGCLSLVKLPSIGNVINL, ATNLDTLYLDGCSNLLELPSSIWNI, TNLQSLYLNGCSSLKELPSLVENA, NLQSLSLMKCSSLVELPSSIWRI, and CSSLLELNLVSHPVVPDSLILD.

The enzyme catalyses NAD(+) + H2O = ADP-D-ribose + nicotinamide + H(+). TIR-NB-LRR receptor-like protein that contributes to disease resistance induced by the Pseudomonas syringae type III effector AvrB. Acts additively with RPM1 to generate a full disease resistance response to P.syringae expressing this type III effector. This is Disease resistance protein TAO1 from Arabidopsis thaliana (Mouse-ear cress).